The primary structure comprises 325 residues: Elongation factor P--(R)-beta-lysine ligase (325 aa).

76-78 (SPE) lines the substrate pocket. ATP contacts are provided by residues 100–102 (RNE) and Asn109. Residue Tyr118 coordinates substrate. 244–245 (EL) lines the ATP pocket. A substrate-binding site is contributed by Glu251. Gly300 contributes to the ATP binding site.

This sequence belongs to the class-II aminoacyl-tRNA synthetase family. EpmA subfamily. As to quaternary structure, homodimer.

It carries out the reaction D-beta-lysine + L-lysyl-[protein] + ATP = N(6)-((3R)-3,6-diaminohexanoyl)-L-lysyl-[protein] + AMP + diphosphate + H(+). Its function is as follows. With EpmB is involved in the beta-lysylation step of the post-translational modification of translation elongation factor P (EF-P). Catalyzes the ATP-dependent activation of (R)-beta-lysine produced by EpmB, forming a lysyl-adenylate, from which the beta-lysyl moiety is then transferred to the epsilon-amino group of a conserved specific lysine residue in EF-P. The sequence is that of Elongation factor P--(R)-beta-lysine ligase from Sodalis glossinidius (strain morsitans).